Reading from the N-terminus, the 536-residue chain is Indolin-2-one monooxygenase (536 aa).

A helical transmembrane segment spans residues 18-34 (GTATHALLLGVLIFLVI). Cys-480 serves as a coordination point for heme.

This sequence belongs to the cytochrome P450 family. Heme is required as a cofactor.

The protein localises to the membrane. The catalysed reaction is indolin-2-one + reduced [NADPH--hemoprotein reductase] + O2 = 3-hydroxyindolin-2-one + oxidized [NADPH--hemoprotein reductase] + H2O + H(+). The protein operates within secondary metabolite biosynthesis; 2,4-dihydroxy-1,4-benzoxazin-3-one biosynthesis; 2,4-dihydroxy-1,4-benzoxazin-3-one from indoleglycerol phosphate: step 3/5. Functionally, catalyzes the conversion of indolin-2-one to 3-hydroxyindolin-2-one. This Zea mays (Maize) protein is Indolin-2-one monooxygenase (CYP71C2).